The sequence spans 295 residues: sn-glycerol-3-phosphate transport system permease protein UgpA (295 aa).

Over 1–11 (MSSSRPVFRSR) the chain is Cytoplasmic. The chain crosses the membrane as a helical span at residues 12–32 (WLPYLLVAPQLIITVIFFIWP). Over 33–80 (AGEALWYSLQSVDPFGFSSRFVGLDNFVALFHDSYYIDSFWTTIKFST) the chain is Periplasmic. The ABC transmembrane type-1 domain occupies 76–284 (IKFSTFVTVS…FLVIVLTVMQ (209 aa)). The helical transmembrane segment at 81–101 (FVTVSGLLVSLFFAALVEYIV) threads the bilayer. Over 102–109 (RGSRFYQT) the chain is Cytoplasmic. A helical transmembrane segment spans residues 110 to 130 (LMLLPYAVAPAVAAVLWIFLF). Residues 131-156 (NPGRGLITHFLAEFGYDWNHAQNSGQ) lie on the Periplasmic side of the membrane. Residues 157 to 177 (AMFLVVFASVWKQISYNFLFF) traverse the membrane as a helical segment. Over 178–207 (YAALQSIPRSLIEAAAIDGAGPIRRFFKIA) the chain is Cytoplasmic. The chain crosses the membrane as a helical span at residues 208 to 228 (LPLIAPVSFFLLVVNLVYAFF). At 229-262 (DTFPVIDAATSGGPVQATTTLIYKIYREGFTGLD) the chain is on the periplasmic side. A helical transmembrane segment spans residues 263 to 283 (LASSAAQSVVLMFLVIVLTVM). Topologically, residues 284-295 (QFRYVESKVRYQ) are cytoplasmic.

The protein belongs to the binding-protein-dependent transport system permease family. UgpAE subfamily. In terms of assembly, the complex is composed of two ATP-binding proteins (UgpC), two transmembrane proteins (UgpA and UgpE) and a solute-binding protein (UgpB).

The protein resides in the cell inner membrane. In terms of biological role, part of the ABC transporter complex UgpBAEC involved in sn-glycerol-3-phosphate (G3P) import. Probably responsible for the translocation of the substrate across the membrane. This Escherichia coli O157:H7 protein is sn-glycerol-3-phosphate transport system permease protein UgpA (ugpA).